The primary structure comprises 178 residues: Cytochrome b6-f complex iron-sulfur subunit (178 aa).

The helical transmembrane segment at 20–42 (LLTFGTATGVALGALYPVANYFM) threads the bilayer. In terms of domain architecture, Rieske spans 65 to 161 (KTGWLATHQA…VDIEDDAVLV (97 aa)). Positions 107, 109, 125, and 128 each coordinate [2Fe-2S] cluster. A disulfide bridge links Cys-112 with Cys-127.

This sequence belongs to the Rieske iron-sulfur protein family. As to quaternary structure, the 4 large subunits of the cytochrome b6-f complex are cytochrome b6, subunit IV (17 kDa polypeptide, PetD), cytochrome f and the Rieske protein, while the 4 small subunits are PetG, PetL, PetM and PetN. The complex functions as a dimer. [2Fe-2S] cluster is required as a cofactor.

It localises to the cellular thylakoid membrane. It catalyses the reaction 2 oxidized [plastocyanin] + a plastoquinol + 2 H(+)(in) = 2 reduced [plastocyanin] + a plastoquinone + 4 H(+)(out). Functionally, component of the cytochrome b6-f complex, which mediates electron transfer between photosystem II (PSII) and photosystem I (PSI), cyclic electron flow around PSI, and state transitions. This chain is Cytochrome b6-f complex iron-sulfur subunit, found in Prochlorococcus marinus (strain MIT 9312).